Reading from the N-terminus, the 155-residue chain is Ribonuclease H (155 aa).

The 142-residue stretch at 1–142 (MLKQVEIFTD…CDELARAAAS (142 aa)) folds into the RNase H type-1 domain. Mg(2+)-binding residues include aspartate 10, glutamate 48, aspartate 70, and aspartate 134.

The protein belongs to the RNase H family. Monomer. Mg(2+) serves as cofactor.

It localises to the cytoplasm. It carries out the reaction Endonucleolytic cleavage to 5'-phosphomonoester.. Functionally, endonuclease that specifically degrades the RNA of RNA-DNA hybrids. This chain is Ribonuclease H, found in Klebsiella pneumoniae subsp. pneumoniae (strain ATCC 700721 / MGH 78578).